Here is a 194-residue protein sequence, read N- to C-terminus: 7-methyl-GTP pyrophosphatase (194 aa).

The active-site Proton acceptor is Asp-70.

The protein belongs to the Maf family. YceF subfamily. A divalent metal cation serves as cofactor.

Its subcellular location is the cytoplasm. The catalysed reaction is N(7)-methyl-GTP + H2O = N(7)-methyl-GMP + diphosphate + H(+). In terms of biological role, nucleoside triphosphate pyrophosphatase that hydrolyzes 7-methyl-GTP (m(7)GTP). May have a dual role in cell division arrest and in preventing the incorporation of modified nucleotides into cellular nucleic acids. This Ralstonia nicotianae (strain ATCC BAA-1114 / GMI1000) (Ralstonia solanacearum) protein is 7-methyl-GTP pyrophosphatase.